Reading from the N-terminus, the 102-residue chain is Small ribosomal subunit protein uS10 (102 aa).

The protein belongs to the universal ribosomal protein uS10 family. As to quaternary structure, part of the 30S ribosomal subunit.

In terms of biological role, involved in the binding of tRNA to the ribosomes. The protein is Small ribosomal subunit protein uS10 of Brevibacillus brevis (strain 47 / JCM 6285 / NBRC 100599).